Here is a 284-residue protein sequence, read N- to C-terminus: Tropomyosin-1 (284 aa).

A coiled-coil region spans residues 1-284 (MDGIKKKMIA…DQTFAELTGY (284 aa)). The tract at residues 111–131 (TKLEEASKTAEESERGRKDLE) is disordered.

Belongs to the tropomyosin family. Homodimer.

Tropomyosin, in association with the troponin complex, plays a central role in the calcium dependent regulation of muscle contraction. The protein is Tropomyosin-1 of Schistosoma mansoni (Blood fluke).